A 91-amino-acid chain; its full sequence is Cell division protein CrgA (91 aa).

Polar residues predominate over residues 1–24; that stretch reads MPKSKITTEGSALPQSSSSATNRT. The disordered stretch occupies residues 1-28; the sequence is MPKSKITTEGSALPQSSSSATNRTPVKI. Helical transmembrane passes span 38-58 and 68-88; these read IAIM…NYLA and LGPW…LMTM.

Belongs to the CrgA family.

It localises to the cell membrane. Functionally, involved in cell division. This chain is Cell division protein CrgA, found in Corynebacterium aurimucosum (strain ATCC 700975 / DSM 44827 / CIP 107346 / CN-1) (Corynebacterium nigricans).